A 27-amino-acid polypeptide reads, in one-letter code: Protein YqfI (27 aa).

In Escherichia coli (strain K12), this protein is Protein YqfI.